We begin with the raw amino-acid sequence, 512 residues long: Cytochrome P450 84A4 (512 aa).

Residues 7–24 traverse the membrane as a helical segment; the sequence is LIVLVPLLLFLFPHLLLR. Position 447 (C447) interacts with heme.

It belongs to the cytochrome P450 family. Heme serves as cofactor. As to expression, expressed in seedlings, roots, stems and inflorescence nodes. Low or no expression in leaves, flowers, seeds and lignifying tissue.

It localises to the membrane. Cytochrome P450 involved in the production of catechol-substituted substrates needed for the arabidopyrones biosynthesis. Converts p-coumaraldehyde into caffealdehyde. This is Cytochrome P450 84A4 (CYP84A4) from Arabidopsis thaliana (Mouse-ear cress).